The sequence spans 114 residues: Peroxisomal biogenesis factor 39 (114 aa).

2 disordered regions span residues 1 to 26 and 53 to 114; these read MSWWQDMDQRGGVSSPSGALASAEPA and ITAT…PRVS. S102 bears the Phosphoserine mark.

Its subcellular location is the peroxisome. In terms of biological role, may be a peroxin involved in the PTS2-mediated protein import pathway. The sequence is that of Peroxisomal biogenesis factor 39 (Pex39) from Mus musculus (Mouse).